The primary structure comprises 1239 residues: DNA polymerase subunit gamma-1 (1239 aa).

The disordered stretch occupies residues Met-1–Gln-68. Low complexity-rich tracts occupy residues Val-9–Ser-36 and Gln-44–Gln-60. The tract at residues Gln-43–Gln-55 is does not contribute to polymerase and exonuclease enzymatic activities. Residues Val-196–Glu-200 carry the Exo I motif. Asp-198 acts as the Exonuclease activity in catalysis. The short motif at Val-267 to Arg-275 is the Exo II element. A DNA-binding site is contributed by Ser-306. A disordered region spans residues Gly-318–Pro-340. The Exo III motif lies at Tyr-395–Thr-403. Residues Glu-506–Gly-531 are disordered. An accessory-interacting determinant region spans residues Ala-510–Gly-571. Arg-579 is an RNA binding site. Ser-593 contacts DNA. RNA-binding residues include His-754, Gly-763, and Lys-768. Positions 806 and 849 each coordinate DNA. Residues Thr-858 to Asn-864 are trigger loop. The RNA site is built by Ser-863 and Arg-869. The Pol A motif lies at Val-887–Leu-896. Residues Asp-890, Val-891, Ser-893, Glu-895, Arg-943, Lys-947, and Tyr-951 each contribute to the a 2'-deoxyribonucleoside 5'-triphosphate site. Mg(2+) is bound by residues Asp-890 and Val-891. The Pol B signature appears at Arg-943 to Gly-958. 2 residues coordinate DNA: Thr-1094 and Ser-1095. The Pol C signature appears at His-1134–Val-1141. Asp-1135 contacts a 2'-deoxyribonucleoside 5'-triphosphate. Residue Asp-1135 participates in Mg(2+) binding.

It belongs to the DNA polymerase type-A family. Heterotrimer composed of a catalytic subunit and a homodimer of accessory subunits (POLG:POLG2). Interacts with TTC3. Interacts with LIG3. Requires Mg(2+) as cofactor.

It localises to the mitochondrion. It is found in the mitochondrion matrix. The protein localises to the mitochondrion nucleoid. It carries out the reaction DNA(n) + a 2'-deoxyribonucleoside 5'-triphosphate = DNA(n+1) + diphosphate. The catalysed reaction is a 3'-end 2'-deoxyribonucleotidyl-deoxyribonucleotide-DNA + H2O = a 3'-end 2'-deoxyribonucleotide-DNA + a 2'-deoxyribonucleoside 5'-phosphate + H(+). The enzyme catalyses a 5'-end 2'-deoxyribose-2'-deoxyribonucleotide-DNA = (2E,4S)-4-hydroxypenten-2-al-5-phosphate + a 5'-end 5'-phospho-2'-deoxyribonucleoside-DNA + H(+). With respect to regulation, inhibited by dideoxynucleotides such as antiviral agent zalcitabine. Its function is as follows. Catalytic subunit of DNA polymerase gamma solely responsible for replication of mitochondrial DNA (mtDNA). Replicates both heavy and light strands of the circular mtDNA genome using a single-stranded DNA template, RNA primers and the four deoxyribonucleoside triphosphates as substrates. Has 5' -&gt; 3' polymerase activity. Functionally interacts with TWNK and SSBP1 at the replication fork to form a highly processive replisome, where TWNK unwinds the double-stranded DNA template prior to replication and SSBP1 covers the parental heavy strand to enable continuous replication of the entire mitochondrial genome. A single nucleotide incorporation cycle includes binding of the incoming nucleotide at the insertion site, a phosphodiester bond formation reaction that extends the 3'-end of the primer DNA, and translocation of the primer terminus to the post-insertion site. After completing replication of a mtDNA strand, mediates 3' -&gt; 5' exonucleolytic degradation at the nick to enable proper ligation. Highly accurate due to high nucleotide selectivity and 3' -&gt; 5' exonucleolytic proofreading. Proficiently corrects base substitutions, single-base additions and deletions in non-repetitive sequences and short repeats, but displays lower proofreading activity when replicating longer homopolymeric stretches. Exerts exonuclease activity toward single-stranded DNA and double-stranded DNA containing 3'-terminal mispairs. When a misincorporation occurs, transitions from replication to a pro-nucleolytic editing mode and removes the missincorporated nucleoside in the exonuclease active site. Proceeds via an SN2 nucleolytic mechanism in which Asp-198 catalyzes phosphodiester bond hydrolysis and Glu-200 stabilizes the leaving group. As a result the primer strand becomes one nucleotide shorter and is positioned in the post-insertion site, ready to resume DNA synthesis. Exerts 5'-deoxyribose phosphate (dRP) lyase activity and mediates repair-associated mtDNA synthesis (gap filling) in base-excision repair pathway. Catalyzes the release of the 5'-terminal 2-deoxyribose-5-phosphate sugar moiety from incised apurinic/apyrimidinic (AP) sites to produce a substrate for DNA ligase. The dRP lyase reaction does not require divalent metal ions and likely proceeds via a Schiff base intermediate in a beta-elimination reaction mechanism. The polypeptide is DNA polymerase subunit gamma-1 (Homo sapiens (Human)).